Consider the following 515-residue polypeptide: MSRAAAKFKIPMPVTKADFAFPSLRAFSIVVAADQQHGIGDGETIPWTVPETLAFFKDQTTLLRNKKPPTEKKRNAVVMGRKTWEVPLKFRPLKGRLNVVLSCRRPVDDLLAQLPEEKRAAAAADVVINGGLKEALHLLARPPYCSSIETAYCIGGARVYTEAMQSPCVEKLKEVYLTRVHTAPTCNRFYEFVRRRRARAAVDLESTSGVKVSDAAAHLSYEIMKYVPHNAEERQYLELIDRIMKTGLVKEDRTGVGTISLFGAQMFSLRDNQLPLLTTKRVFWRGVCEELIWFLRGETNAHVLADKDIHIWDGNGSREFLDSRGLTENKEMDLGPVYGFQWRHFGADYKGFDANYDEGVDQIKTIVETLKTNDRRLLVTAWNPCALHKMAVRPCHLLGQFYVNTQTKELSCMLYQRCCDMGLGVPFNIASYALLTILIAKATGLRPGELVHTLGTAHVYSNHVEALKEQLQRVPVAFPVLVFKKEREFLEDYESTDMEVVDYVPYPPIKMEMAV.

A DHFR domain is found at A26–P228. V30 contributes to the substrate binding site. NADP(+) contacts are provided by residues A32, G38–T44, R81–T83, and L101–R104. Substrate is bound by residues I154, Y160, and T178. Residue G155–E162 participates in NADP(+) binding. The tract at residues E233–V515 is thymidylate synthase. Position 253 (R253) interacts with dUMP. The active site involves C395. Residues H396, Q416–D420, N428, and H458–Y460 each bind dUMP.

In the N-terminal section; belongs to the dihydrofolate reductase family. The protein in the C-terminal section; belongs to the thymidylate synthase family.

The catalysed reaction is (6S)-5,6,7,8-tetrahydrofolate + NADP(+) = 7,8-dihydrofolate + NADPH + H(+). It catalyses the reaction dUMP + (6R)-5,10-methylene-5,6,7,8-tetrahydrofolate = 7,8-dihydrofolate + dTMP. It functions in the pathway cofactor biosynthesis; tetrahydrofolate biosynthesis; 5,6,7,8-tetrahydrofolate from 7,8-dihydrofolate: step 1/1. In terms of biological role, bifunctional enzyme. Involved in de novo dTMP biosynthesis. Key enzyme in folate metabolism. Catalyzes an essential reaction for de novo glycine and purine synthesis, DNA precursor synthesis, and for the conversion of dUMP to dTMP. The protein is Bifunctional dihydrofolate reductase-thymidylate synthase of Crithidia fasciculata.